Here is a 144-residue protein sequence, read N- to C-terminus: MSQGRSRGKAKGVEEFRPYVTRALPVGARVTCADNSGAKVLEIIMVQKAKTRVSRLPAAAVGDYVNVVVKKGPAELRKQVHGAVIIRQKYPVRRLNGVRVAFEDNAAVLTTPEGEMKGTDIKGPVAAEASEKWPRLANLASMVV.

This sequence belongs to the universal ribosomal protein uL14 family. In terms of assembly, part of the 50S ribosomal subunit. Forms a cluster with proteins L3 and L24e, part of which may contact the 16S rRNA in 2 intersubunit bridges.

Binds to 23S rRNA. Forms part of two intersubunit bridges in the 70S ribosome. This Cenarchaeum symbiosum (strain A) protein is Large ribosomal subunit protein uL14.